Reading from the N-terminus, the 265-residue chain is Pyridoxine 5'-phosphate synthase (265 aa).

3-amino-2-oxopropyl phosphate is bound at residue asparagine 6. Aspartate 8–histidine 9 is a 1-deoxy-D-xylulose 5-phosphate binding site. Arginine 17 provides a ligand contact to 3-amino-2-oxopropyl phosphate. Residue histidine 42 is the Proton acceptor of the active site. 1-deoxy-D-xylulose 5-phosphate-binding residues include arginine 44 and histidine 49. Glutamate 69 acts as the Proton acceptor in catalysis. Threonine 99 lines the 1-deoxy-D-xylulose 5-phosphate pocket. Histidine 213 (proton donor) is an active-site residue. 3-amino-2-oxopropyl phosphate-binding positions include glycine 214 and glycine 235–glutamine 236.

This sequence belongs to the PNP synthase family. As to quaternary structure, homooctamer; tetramer of dimers.

The protein localises to the cytoplasm. The enzyme catalyses 3-amino-2-oxopropyl phosphate + 1-deoxy-D-xylulose 5-phosphate = pyridoxine 5'-phosphate + phosphate + 2 H2O + H(+). Its pathway is cofactor biosynthesis; pyridoxine 5'-phosphate biosynthesis; pyridoxine 5'-phosphate from D-erythrose 4-phosphate: step 5/5. Functionally, catalyzes the complicated ring closure reaction between the two acyclic compounds 1-deoxy-D-xylulose-5-phosphate (DXP) and 3-amino-2-oxopropyl phosphate (1-amino-acetone-3-phosphate or AAP) to form pyridoxine 5'-phosphate (PNP) and inorganic phosphate. The protein is Pyridoxine 5'-phosphate synthase of Nitratiruptor sp. (strain SB155-2).